The sequence spans 987 residues: Eukaryotic translation initiation factor 3 subunit A (987 aa).

Positions 93–122 (LHLATDKAEQARSQADALEEALDVDDLEAD) form a coiled coil. In terms of domain architecture, PCI spans 316–513 (LQLIASSVVL…GVVIFGNLGI (198 aa)). Coiled coils occupy residues 556–742 (TVEK…EKNR) and 797–858 (LKIE…REEL). Over residues 808 to 859 (QEEEEARKQEEAERLKKVEAERKANLDKAFEKQRQREIELEEKSRREREELL) the composition is skewed to basic and acidic residues. The interval 808-987 (QEEEEARKQE…GSSRPRPTQR (180 aa)) is disordered. The span at 872 to 894 (PTVTPVGTTAPAAAAAAAGAPAA) shows a compositional bias: low complexity. Polar residues-rich tracts occupy residues 905 to 916 (TEVSGPSAPTSS) and 976 to 987 (TFGSSRPRPTQR).

This sequence belongs to the eIF-3 subunit A family. In terms of assembly, component of the eukaryotic translation initiation factor 3 (eIF-3) complex. Binds to the translation initiation factor TIF3H1.

It is found in the cytoplasm. Its function is as follows. RNA-binding component of the eukaryotic translation initiation factor 3 (eIF-3) complex, which is involved in protein synthesis of a specialized repertoire of mRNAs and, together with other initiation factors, stimulates binding of mRNA and methionyl-tRNAi to the 40S ribosome. The eIF-3 complex specifically targets and initiates translation of a subset of mRNAs involved in cell proliferation. This Arabidopsis thaliana (Mouse-ear cress) protein is Eukaryotic translation initiation factor 3 subunit A (TIF3A1).